The chain runs to 296 residues: Uricase (296 aa).

Residues K14 and T61 each act as charge relay system in the active site. Urate is bound by residues T61, D62, F163, R180, V229, Q230, and N256. H258 functions as the Charge relay system in the catalytic mechanism.

This sequence belongs to the uricase family.

Its subcellular location is the peroxisome. The protein resides in the cytoplasm. It is found in the nucleus. The catalysed reaction is urate + O2 + H2O = 5-hydroxyisourate + H2O2. Its pathway is purine metabolism; urate degradation; (S)-allantoin from urate: step 1/3. Functionally, catalyzes the oxidation of uric acid to 5-hydroxyisourate, which is further processed to form (S)-allantoin. This Schizosaccharomyces pombe (strain 972 / ATCC 24843) (Fission yeast) protein is Uricase.